Here is a 433-residue protein sequence, read N- to C-terminus: Probable mannan endo-1,4-beta-mannosidase F (433 aa).

Residues 1–19 form the signal peptide; the sequence is MKRQALTLIPLLGAAAAQS. Residues 20–53 enclose the CBM1 domain; it reads GPYGQCGGNDWSGATTCVSGYVCVYQNEWYSQCV. Residues 56-82 are thr-rich linker; it reads TATSSSTTLTTTTSATTRTTTTTTSTT. A catalytic region spans residues 83 to 433; that stretch reads SVPSSTNFPS…TEHMERIAAR (351 aa). An N-linked (GlcNAc...) asparagine glycan is attached at N97. Substrate contacts are provided by W142 and N255. Catalysis depends on E256, which acts as the Proton donor. Position 331 (Y331) interacts with substrate. Residue E364 is the Nucleophile of the active site. Residue W394 participates in substrate binding.

The protein belongs to the glycosyl hydrolase 5 (cellulase A) family.

It is found in the secreted. The enzyme catalyses Random hydrolysis of (1-&gt;4)-beta-D-mannosidic linkages in mannans, galactomannans and glucomannans.. Functionally, endo-1,4-mannanase, a crucial enzyme for depolymerization of seed galactomannans and wood galactoglucomannans. The protein is Probable mannan endo-1,4-beta-mannosidase F (manF) of Emericella nidulans (strain FGSC A4 / ATCC 38163 / CBS 112.46 / NRRL 194 / M139) (Aspergillus nidulans).